The sequence spans 514 residues: uncharacterized protein (514 aa).

The segment covering 1 to 15 (MSSPRGASSMSSRSP) has biased composition (low complexity). The interval 1 to 22 (MSSPRGASSMSSRSPVNLEPES) is disordered.

This is an uncharacterized protein from Ictaluridae (bullhead catfishes).